The primary structure comprises 170 residues: Flavodoxin (170 aa).

Residues 4–165 enclose the Flavodoxin-like domain; the sequence is IGLFYGTQTG…RIKTWVSQLK (162 aa).

The protein belongs to the flavodoxin family. The cofactor is FMN.

Its function is as follows. Low-potential electron donor to a number of redox enzymes. The polypeptide is Flavodoxin (isiB) (Synechococcus elongatus (strain ATCC 33912 / PCC 7942 / FACHB-805) (Anacystis nidulans R2)).